The sequence spans 623 residues: Adenine deaminase 2 (623 aa).

It belongs to the metallo-dependent hydrolases superfamily. Adenine deaminase family. Requires Mn(2+) as cofactor.

The enzyme catalyses adenine + H2O + H(+) = hypoxanthine + NH4(+). The sequence is that of Adenine deaminase 2 from Jannaschia sp. (strain CCS1).